The primary structure comprises 413 residues: E3 ubiquitin-protein ligase makorin (413 aa).

2 C3H1-type zinc fingers span residues 2-29 (PRHETDCRYFANGYCSKGNTCTFTHDVA) and 30-57 (TRNENICHFNLVGKCSYGRACRFLHTRP). The disordered stretch occupies residues 61 to 85 (ELPSCSTPQTSQNQQNLQNSGQRVR). Residues 66–82 (STPQTSQNQQNLQNSGQ) show a composition bias toward low complexity. Residues 138-167 (QAQLMMCPYHQKSGDCNRQDMDCPFAHGNY) form a C3H1-type 3 zinc finger. The RING-type zinc finger occupies 213–267 (CGICMENIFEKNLRFGILNGCQHCFCLDCIRQWRSKDQENVELATKTVRSCPECR). The C3H1-type 4 zinc-finger motif lies at 296 to 327 (NTKRKICKYYSNERSRGACPFGNKCFYKHQLP).

In terms of assembly, component of a complex at least containing lep-2, lin-28 and the long non-coding RNA lep-5, which mediates the degradation of lin-28. As to expression, expressed in seam, tail tip, and other hypodermal cells, head and tail neurons, the pharynx, intestine and the developing hermaphrodite somatic gonad. Not expressed in body wall muscle cells.

The protein localises to the cytoplasm. It catalyses the reaction S-ubiquitinyl-[E2 ubiquitin-conjugating enzyme]-L-cysteine + [acceptor protein]-L-lysine = [E2 ubiquitin-conjugating enzyme]-L-cysteine + N(6)-ubiquitinyl-[acceptor protein]-L-lysine.. Its pathway is protein modification; protein ubiquitination. Functionally, E3 ubiquitin ligase which catalyzes the covalent attachment of ubiquitin moieties onto substrate proteins. Promotes the larval to adult transition by binding to the long non-coding RNA lep-5 to target the heterochronic protein lin-28 for degradation by the proteasome. This association and degradation of lin-28 also controls the timing of the sexual differentiation of individual neurons in males including the AIM, AWA, ADF, ASJ and CEM neurons. Plays a role in governing the developmental timing of male tail tip morphogenesis. Plays a role in two aspects of male mating behavior: response to hermaphrodite contact and vulva location. May play a role in the detection of preferred food sources. This is E3 ubiquitin-protein ligase makorin from Caenorhabditis elegans.